An 843-amino-acid polypeptide reads, in one-letter code: Elongation factor 2 (843 aa).

One can recognise a tr-type G domain in the interval 17–253 (HNIRNMSVIA…LWGENFFDPA (237 aa)). Position 26–33 (26–33 (AHVDHGKS)) interacts with GTP. A phosphothreonine mark is found at threonine 57 and threonine 59. 158–161 (NKMD) contributes to the GTP binding site. At histidine 700 the chain carries Diphthamide.

Belongs to the TRAFAC class translation factor GTPase superfamily. Classic translation factor GTPase family. EF-G/EF-2 subfamily. Post-translationally, phosphorylation by EF-2 kinase completely inactivates EF-2.

It is found in the cytoplasm. It carries out the reaction GTP + H2O = GDP + phosphate + H(+). In terms of biological role, catalyzes the GTP-dependent ribosomal translocation step during translation elongation. During this step, the ribosome changes from the pre-translocational (PRE) to the post-translocational (POST) state as the newly formed A-site-bound peptidyl-tRNA and P-site-bound deacylated tRNA move to the P and E sites, respectively. Catalyzes the coordinated movement of the two tRNA molecules, the mRNA and conformational changes in the ribosome. This is Elongation factor 2 from Beta vulgaris (Sugar beet).